The chain runs to 779 residues: Acyl-homoserine lactone acylase PvdQ (779 aa).

The signal sequence occupies residues 1–25 (MIISRPLCSFVFAGLSFAVILPAQA). A propeptide spans 202-223 (AQQAQALQLAAARNQRFALERG) (spacer peptide). S224 functions as the Nucleophile in the catalytic mechanism. The span at 731-746 (ESSNPQSAHSSDQTEA) shows a compositional bias: polar residues. The interval 731–750 (ESSNPQSAHSSDQTEAFSKK) is disordered.

Belongs to the peptidase S45 family. Heterodimer of an alpha subunit and a beta subunit processed from the same precursor.

It is found in the periplasm. The catalysed reaction is an N-acyl-L-homoserine lactone + H2O = L-homoserine lactone + a carboxylate. Its function is as follows. Catalyzes the deacylation of acyl-homoserine lactone (AHL or acyl-HSL), releasing homoserine lactone (HSL) and the corresponding fatty acid. Possesses a specificity for the degradation of long-chain acyl-HSLs (side chains of 11 to 14 carbons in length). This is Acyl-homoserine lactone acylase PvdQ (pvdQ) from Pseudomonas syringae pv. syringae (strain B728a).